A 202-amino-acid chain; its full sequence is Transcription antitermination protein NusB (202 aa).

Basic and acidic residues predominate over residues 1-11 (MTEERTADNKA). 2 disordered regions span residues 1–21 (MTEE…KRHG) and 169–202 (SAAK…SDEA).

This sequence belongs to the NusB family.

In terms of biological role, involved in transcription antitermination. Required for transcription of ribosomal RNA (rRNA) genes. Binds specifically to the boxA antiterminator sequence of the ribosomal RNA (rrn) operons. This is Transcription antitermination protein NusB from Corynebacterium jeikeium (strain K411).